A 321-amino-acid polypeptide reads, in one-letter code: Carnitine monooxygenase reductase subunit (321 aa).

Residues 4–109 (YQMFEVQVSQ…STPNNLFALI (106 aa)) form the FAD-binding FR-type domain. One can recognise a 2Fe-2S ferredoxin-type domain in the interval 233 to 321 (DAFTLVLARS…AKGKRLVLDL (89 aa)). 4 residues coordinate [2Fe-2S] cluster: Cys-270, Cys-275, Cys-278, and Cys-308.

Belongs to the PDR/VanB family. CntB subfamily. Composed of an oxygenase subunit (yeaW) and a reductase subunit (yeaX). It depends on FMN as a cofactor. Requires [2Fe-2S] cluster as cofactor.

It carries out the reaction (R)-carnitine + NADH + O2 + H(+) = (3R)-3-hydroxy-4-oxobutanoate + trimethylamine + NAD(+) + H2O. The catalysed reaction is (R)-carnitine + NADPH + O2 + H(+) = (3R)-3-hydroxy-4-oxobutanoate + trimethylamine + NADP(+) + H2O. It functions in the pathway amine and polyamine metabolism; carnitine metabolism. Functionally, converts carnitine to trimethylamine and malic semialdehyde. Can also use gamma-butyrobetaine, choline and betaine as substrates. The protein is Carnitine monooxygenase reductase subunit (yeaX) of Escherichia coli (strain K12).